The following is a 335-amino-acid chain: Erlin-2 (335 aa).

The Cytoplasmic segment spans residues 1–2 (MS). The helical transmembrane segment at 3 to 23 (HAGAIAAIGVALIAAALFSAI) threads the bilayer. The Lumenal segment spans residues 24-335 (HKIEEGHVGV…ALNEPAVGDE (312 aa)). Asparagine 106 carries an N-linked (GlcNAc...) asparagine glycan. Over residues 310–321 (AGPSVQSATLLQ) the composition is skewed to polar residues. Positions 310 to 335 (AGPSVQSATLLQDDSPALNEPAVGDE) are disordered.

Belongs to the band 7/mec-2 family.

It localises to the endoplasmic reticulum membrane. Functionally, mediates the endoplasmic reticulum-associated degradation (ERAD) of inositol 1,4,5-trisphosphate receptors (IP3Rs). Promotes sterol-accelerated ERAD of HMGCR. Involved in regulation of cellular cholesterol homeostasis by regulation the SREBP signaling pathway. The protein is Erlin-2 (erlin2) of Xenopus tropicalis (Western clawed frog).